Here is a 145-residue protein sequence, read N- to C-terminus: Protein SprT-like (145 aa).

The SprT-like domain maps to 4 to 140; the sequence is TNYVQEVSLA…VCGNCHGKLI (137 aa). His-64 contributes to the Zn(2+) binding site. Glu-65 is a catalytic residue. His-68 serves as a coordination point for Zn(2+).

The protein belongs to the SprT family. Requires Zn(2+) as cofactor.

Its subcellular location is the cytoplasm. This Streptococcus pyogenes serotype M6 (strain ATCC BAA-946 / MGAS10394) protein is Protein SprT-like.